Reading from the N-terminus, the 298-residue chain is ATP synthase gamma chain (298 aa).

It belongs to the ATPase gamma chain family. In terms of assembly, F-type ATPases have 2 components, CF(1) - the catalytic core - and CF(0) - the membrane proton channel. CF(1) has five subunits: alpha(3), beta(3), gamma(1), delta(1), epsilon(1). CF(0) has three main subunits: a, b and c.

The protein resides in the cell inner membrane. Produces ATP from ADP in the presence of a proton gradient across the membrane. The gamma chain is believed to be important in regulating ATPase activity and the flow of protons through the CF(0) complex. The sequence is that of ATP synthase gamma chain from Wolinella succinogenes (strain ATCC 29543 / DSM 1740 / CCUG 13145 / JCM 31913 / LMG 7466 / NCTC 11488 / FDC 602W) (Vibrio succinogenes).